Here is a 232-residue protein sequence, read N- to C-terminus: Ethylene-responsive transcription factor ERF025 (232 aa).

The span at 1 to 29 (MSNNNNSPTTVNQETTTSREVSITLPTDQ) shows a compositional bias: polar residues. Positions 1–63 (MSNNNNSPTT…TATGLSGKHS (63 aa)) are disordered. Over residues 30 to 50 (SPQTSPGSSSSPSPRPSGGSP) the composition is skewed to low complexity. The AP2/ERF DNA-binding region spans 64–120 (IFRGIRLRNGKWVSEIREPRKTTRIWLGTYPVPEMAAAAYDVAALALKGPDAVLNFP). A disordered region spans residues 213 to 232 (PTMEDDSPENHEGDNLWSYK).

Belongs to the AP2/ERF transcription factor family. ERF subfamily.

Its subcellular location is the nucleus. Its function is as follows. Probably acts as a transcriptional activator. Binds to the GCC-box pathogenesis-related promoter element. May be involved in the regulation of gene expression by stress factors and by components of stress signal transduction pathways. The chain is Ethylene-responsive transcription factor ERF025 (ERF025) from Arabidopsis thaliana (Mouse-ear cress).